The following is a 184-amino-acid chain: Potassium-transporting ATPase KdpC subunit (184 aa).

The helical transmembrane segment at Leu10–Ala30 threads the bilayer.

The protein belongs to the KdpC family. As to quaternary structure, the system is composed of three essential subunits: KdpA, KdpB and KdpC.

It localises to the cell inner membrane. Functionally, part of the high-affinity ATP-driven potassium transport (or Kdp) system, which catalyzes the hydrolysis of ATP coupled with the electrogenic transport of potassium into the cytoplasm. This subunit acts as a catalytic chaperone that increases the ATP-binding affinity of the ATP-hydrolyzing subunit KdpB by the formation of a transient KdpB/KdpC/ATP ternary complex. This is Potassium-transporting ATPase KdpC subunit from Flavobacterium psychrophilum (strain ATCC 49511 / DSM 21280 / CIP 103535 / JIP02/86).